The following is a 95-amino-acid chain: ATP-dependent Clp protease adapter protein ClpS (95 aa).

The protein belongs to the ClpS family. Binds to the N-terminal domain of the chaperone ClpA.

Its function is as follows. Involved in the modulation of the specificity of the ClpAP-mediated ATP-dependent protein degradation. The protein is ATP-dependent Clp protease adapter protein ClpS of Synechococcus elongatus (strain ATCC 33912 / PCC 7942 / FACHB-805) (Anacystis nidulans R2).